A 934-amino-acid polypeptide reads, in one-letter code: Replication factor C subunit 1 (934 aa).

The tract at residues 1-190 (MSNSDIRSFF…RSSKSKGLPR (190 aa)) is disordered. Serine 27 carries the phosphoserine modification. The span at 29–39 (KPKRSLKKKRI) shows a compositional bias: basic residues. Over residues 89 to 104 (GVSTTPDEYFEQQSTR) the composition is skewed to polar residues. Over residues 118–128 (TTSKDVVHPVK) the composition is skewed to basic and acidic residues. Positions 165-186 (TSKSKSHTTTATTHTSRSSKSK) are enriched in low complexity. Positions 236 to 326 (GNSDCLSGIS…PASGGTGAAA (91 aa)) constitute a BRCT domain. ATP is bound by residues threonine 362, cysteine 374, 416–423 (GPPGIGKT), and asparagine 519. Residues 876–895 (AEDEMLEEASDSEAANEEDI) show a composition bias toward acidic residues. The disordered stretch occupies residues 876–934 (AEDEMLEEASDSEAANEEDIDLSKDKFISVPKKPKKRTKAKAEASSSSSTSRRSRKKTA).

It belongs to the activator 1 large subunit family. As to quaternary structure, heteropentamer of subunits rfc1, rfc2, rfc3, rfc4 and rfc5 that forms a complex (RFC) with PCNA in the presence of ATP. Interacts with cdc24.

The protein localises to the nucleus. It localises to the nucleolus. In terms of biological role, the elongation of primed DNA templates by DNA polymerase delta and epsilon requires the action of the accessory proteins PCNA and activator 1. Subunit 1 is essential for cell cycle progression. It may associate with components of the DNA replication machinery and serve to enhance the efficiency of DNA replication. This Schizosaccharomyces pombe (strain 972 / ATCC 24843) (Fission yeast) protein is Replication factor C subunit 1 (rfc1).